The following is a 416-amino-acid chain: Trifolitoxin-processing protein TfxD (416 aa).

The next 11 membrane-spanning stretches (helical) occupy residues 24-44 (MIPNVADTIVVTLIGATALQV), 48-68 (VLITILTLNIAFLNFCSLICM), 79-99 (VFAAIVRAACMMIGVYLALIA), 114-134 (IAFIALSALRPFVAGWNAYCA), 153-173 (SSLIYAGVNLLFVGLSHFAGT), 176-196 (SIISLLIGVYLALFHNALAYA), 230-250 (ASFINMLEMGFLALVGWVVAA), 255-275 (IAVFYFPFFTLVELTSGLAIG), 295-315 (VLIAVYSTYSLLCFLIYVGLI), 322-342 (IFALPLSLAGLALLFLICDGL), and 372-392 (VILALAAVLGSVQALAIALVL).

The protein resides in the cell membrane. The actions of the proteins TfxB, TfxD and TfxF are implicated in the processing of the inactive trifolitoxin (TfxA) precursor into the active peptide. In Rhizobium leguminosarum bv. trifolii, this protein is Trifolitoxin-processing protein TfxD (tfxD).